The chain runs to 415 residues: Homoserine O-succinyltransferase (415 aa).

Over residues 1–26 (MTSPALTAASVTPSRNTTSPDTTSHR) the composition is skewed to polar residues. Positions 1–27 (MTSPALTAASVTPSRNTTSPDTTSHRP) are disordered. The AB hydrolase-1 domain occupies 71 to 386 (NAVLICHALN…HGHDAFLLED (316 aa)). The active-site Nucleophile is Ser-177. Residue Arg-247 coordinates substrate. Residues Asp-346 and His-379 contribute to the active site. Asp-380 serves as a coordination point for substrate.

This sequence belongs to the AB hydrolase superfamily. MetX family. As to quaternary structure, homodimer.

Its subcellular location is the cytoplasm. It carries out the reaction L-homoserine + succinyl-CoA = O-succinyl-L-homoserine + CoA. It participates in amino-acid biosynthesis; L-methionine biosynthesis via de novo pathway; O-succinyl-L-homoserine from L-homoserine: step 1/1. In terms of biological role, transfers a succinyl group from succinyl-CoA to L-homoserine, forming succinyl-L-homoserine. The protein is Homoserine O-succinyltransferase of Bordetella avium (strain 197N).